An 886-amino-acid chain; its full sequence is General transcription factor 3C polypeptide 3 (886 aa).

The disordered stretch occupies residues 1-121 (MSGFSPELID…TPEQPTAGDV (121 aa)). At S2 the chain carries N-acetylserine. Residues 12-44 (LEGKISFEEFERRREERKTREKKSLQEKGKLSA) are compositionally biased toward basic and acidic residues. At S43 the chain carries Phosphoserine. The segment covering 53–63 (VPSSSGINSTK) has biased composition (polar residues). Acidic residues predominate over residues 92–113 (ENEDDEEEEEEEEEEEEEEETP). 11 TPR repeats span residues 149–182 (LRGLMGEANIRFARGEREEAILMCMEIIRQAPLA), 183–216 (YEPFSTLAMIYEDQGDMEKSLQFELIAAHLNPSD), 217–250 (TEEWVRLAEMSLEQDNIKQAIFCYTKALKYEPTN), 252–284 (RYLWERSSLYEQMGDHKMAMDGYRRILNLLSPS), 290–323 (MQLARDMAKSYYEANDVTSAINIIDEAFSKHQGL), 326–361 (MEDVNIAAELYISNKQYDKALEIITDFSGIVLEKKT), 421–454 (GDLYLDVAEAFLDVGEYNSALPLLSALVCSERYN), 456–489 (AVVWLRHAECLKALGYMERAAESYGKVVDLAPLH), 491–523 (DARISLSTLQQQLGQPEKALEALEPMYDPDTLA), 733–766 (HALCVLNGHNAFVSGSFKHALGQYVQAFRTHPDE), and 811–844 (QESFYNLGRGLHQLGLIHLAIHYYQKALELPPLV). S282 carries the post-translational modification Phosphoserine.

In terms of assembly, part of the TFIIIC subcomplex TFIIIC2, consisting of six subunits, GTF3C1, GTF3C2, GTF3C3, GTF3C4, GTF3C5 and GTF3C6. Interacts with BRF1 and TBP.

The protein localises to the nucleus. In terms of biological role, involved in RNA polymerase III-mediated transcription. Integral, tightly associated component of the DNA-binding TFIIIC2 subcomplex that directly binds tRNA and virus-associated RNA promoters. This chain is General transcription factor 3C polypeptide 3 (GTF3C3), found in Homo sapiens (Human).